A 61-amino-acid chain; its full sequence is Small ribosomal subunit protein uS14 (61 aa).

Residues cysteine 24, cysteine 27, cysteine 40, and cysteine 43 each contribute to the Zn(2+) site.

The protein belongs to the universal ribosomal protein uS14 family. Zinc-binding uS14 subfamily. In terms of assembly, part of the 30S ribosomal subunit. Contacts proteins S3 and S10. Zn(2+) serves as cofactor.

Functionally, binds 16S rRNA, required for the assembly of 30S particles and may also be responsible for determining the conformation of the 16S rRNA at the A site. This Nitratidesulfovibrio vulgaris (strain ATCC 29579 / DSM 644 / CCUG 34227 / NCIMB 8303 / VKM B-1760 / Hildenborough) (Desulfovibrio vulgaris) protein is Small ribosomal subunit protein uS14.